We begin with the raw amino-acid sequence, 590 residues long: Arginine--tRNA ligase (590 aa).

The short motif at 131–141 is the 'HIGH' region element; the sequence is PNIAKEMHVGH.

Belongs to the class-I aminoacyl-tRNA synthetase family. Monomer.

It is found in the cytoplasm. The catalysed reaction is tRNA(Arg) + L-arginine + ATP = L-arginyl-tRNA(Arg) + AMP + diphosphate. This chain is Arginine--tRNA ligase, found in Synechococcus sp. (strain RCC307).